A 288-amino-acid polypeptide reads, in one-letter code: tRNA pseudouridine synthase A (288 aa).

The active-site Nucleophile is the Asp-59. Tyr-134 is a substrate binding site.

This sequence belongs to the tRNA pseudouridine synthase TruA family. In terms of assembly, homodimer.

It catalyses the reaction uridine(38/39/40) in tRNA = pseudouridine(38/39/40) in tRNA. Its function is as follows. Formation of pseudouridine at positions 38, 39 and 40 in the anticodon stem and loop of transfer RNAs. In Leifsonia xyli subsp. xyli (strain CTCB07), this protein is tRNA pseudouridine synthase A.